The primary structure comprises 252 residues: 5'-nucleotidase SurE (252 aa).

4 residues coordinate a divalent metal cation: Asp-8, Asp-9, Ser-39, and Asn-95.

It belongs to the SurE nucleotidase family. The cofactor is a divalent metal cation.

It is found in the cytoplasm. It carries out the reaction a ribonucleoside 5'-phosphate + H2O = a ribonucleoside + phosphate. In terms of biological role, nucleotidase that shows phosphatase activity on nucleoside 5'-monophosphates. The polypeptide is 5'-nucleotidase SurE (Thermoanaerobacter sp. (strain X514)).